The primary structure comprises 619 residues: Very-long-chain aldehyde decarbonylase GL1-4 (619 aa).

Helical transmembrane passes span 45-65 (IAFSLILPSLLLRMIHNQIWI), 94-114 (GWDDQILFNGLVFYAGYLAMP), 126-146 (GAVVTALVHTGPVEFLYYWFH), 178-198 (FAEHVVYFILFAIPILSTIYL), and 325-345 (AWYMWTLWPLAWLSMVLAWIY). Residues 138 to 272 (VEFLYYWFHR…MPFYDYIYNT (135 aa)) form the Fatty acid hydroxylase domain.

The protein belongs to the sterol desaturase family. As to quaternary structure, homodimer.

It localises to the endoplasmic reticulum membrane. The catalysed reaction is a long-chain fatty aldehyde + 2 NADPH + O2 + H(+) = a long-chain alkane + formate + 2 NADP(+) + H2O. Functionally, aldehyde decarbonylase involved in the conversion of aldehydes to alkanes. Core component of a very-long-chain alkane synthesis complex. In Oryza sativa subsp. indica (Rice), this protein is Very-long-chain aldehyde decarbonylase GL1-4.